The following is a 957-amino-acid chain: Collagen alpha-1(XXI) chain (957 aa).

A signal peptide spans 1–22 (MAHYITFLCMVLVLLLQNSVLA). The 175-residue stretch at 37–211 (DLVFILDGSY…KIREVMKQKL (175 aa)) folds into the VWFA domain. N-linked (GlcNAc...) asparagine glycosylation occurs at Asn62. The 183-residue stretch at 230 to 412 (GFDILLGLDV…VQKLRIYCDP (183 aa)) folds into the Laminin G-like domain. 3 Collagen-like domains span residues 448–500 (PGKP…GARG), 501–542 (LPGY…GDKG), and 543–594 (SPGF…SPGA). 2 disordered regions span residues 448-786 (PGKP…KPGR) and 825-938 (GSPG…ICDP). Low complexity-rich tracts occupy residues 451–462 (PGLQGPKGDPGL) and 471–481 (QPGQDGKPGYQ). Residues 507–517 (EPGRDGDKGDR) show a composition bias toward basic and acidic residues. Composition is skewed to low complexity over residues 618-637 (QKGE…PGMP) and 705-729 (EKGI…IQGH). Collagen-like domains are found at residues 681 to 733 (SPGE…HGAK), 734 to 787 (GERG…PGRE), 825 to 882 (GSPG…GSQG), and 884 to 934 (GYPG…GPPG). A compositionally biased stretch (basic and acidic residues) spans 732–742 (AKGERGEKGEP). Positions 829 to 838 (IPGPPGPIGP) are enriched in pro residues. Residues 839 to 874 (EGPRGLPGLPGRDGVPGLVGVPGRPGVRGLKGLPGR) are compositionally biased toward low complexity. Residues 889-900 (QGPPGPPGPEGP) are compositionally biased toward pro residues.

This sequence belongs to the fibril-associated collagens with interrupted helices (FACIT) family. In terms of tissue distribution, highly expressed in lymph node, jejunum, pancreas, stomach, trachea, testis, uterus and placenta; moderately expressed in brain, colon, lung, prostate, spinal cord, salivary gland and vascular smooth-muscle cells and very weakly expressed in heart, liver, kidney, bone marrow, spleen, thymus, skeletal muscle, adrenal gland and peripheral leukocytes. Expression in heart was higher in the right ventricle and atrium than in the left ventricle and atrium.

Its subcellular location is the secreted. The protein localises to the extracellular space. The protein resides in the extracellular matrix. It localises to the cytoplasm. This chain is Collagen alpha-1(XXI) chain (COL21A1), found in Homo sapiens (Human).